The following is a 269-amino-acid chain: Formamidopyrimidine-DNA glycosylase (269 aa).

The active-site Schiff-base intermediate with DNA is proline 2. Glutamate 3 functions as the Proton donor in the catalytic mechanism. Lysine 57 acts as the Proton donor; for beta-elimination activity in catalysis. Residues histidine 90, arginine 109, and lysine 150 each contribute to the DNA site. The FPG-type zinc-finger motif lies at 235–269 (QVYGRKGEPCRVCGTPIVATKHAQRATFYCRHCQK). Arginine 259 acts as the Proton donor; for delta-elimination activity in catalysis.

Belongs to the FPG family. Monomer. It depends on Zn(2+) as a cofactor.

It catalyses the reaction Hydrolysis of DNA containing ring-opened 7-methylguanine residues, releasing 2,6-diamino-4-hydroxy-5-(N-methyl)formamidopyrimidine.. The catalysed reaction is 2'-deoxyribonucleotide-(2'-deoxyribose 5'-phosphate)-2'-deoxyribonucleotide-DNA = a 3'-end 2'-deoxyribonucleotide-(2,3-dehydro-2,3-deoxyribose 5'-phosphate)-DNA + a 5'-end 5'-phospho-2'-deoxyribonucleoside-DNA + H(+). In terms of biological role, involved in base excision repair of DNA damaged by oxidation or by mutagenic agents. Acts as a DNA glycosylase that recognizes and removes damaged bases. Has a preference for oxidized purines, such as 7,8-dihydro-8-oxoguanine (8-oxoG). Has AP (apurinic/apyrimidinic) lyase activity and introduces nicks in the DNA strand. Cleaves the DNA backbone by beta-delta elimination to generate a single-strand break at the site of the removed base with both 3'- and 5'-phosphates. The sequence is that of Formamidopyrimidine-DNA glycosylase from Salmonella choleraesuis (strain SC-B67).